A 422-amino-acid chain; its full sequence is Enolase (422 aa).

Glutamine 162 lines the (2R)-2-phosphoglycerate pocket. Glutamate 204 functions as the Proton donor in the catalytic mechanism. The Mg(2+) site is built by aspartate 241, glutamate 285, and aspartate 312. (2R)-2-phosphoglycerate contacts are provided by lysine 337, arginine 366, serine 367, and lysine 388. Lysine 337 serves as the catalytic Proton acceptor.

It belongs to the enolase family. Mg(2+) is required as a cofactor.

Its subcellular location is the cytoplasm. The protein localises to the secreted. It is found in the cell surface. The enzyme catalyses (2R)-2-phosphoglycerate = phosphoenolpyruvate + H2O. Its pathway is carbohydrate degradation; glycolysis; pyruvate from D-glyceraldehyde 3-phosphate: step 4/5. Its function is as follows. Catalyzes the reversible conversion of 2-phosphoglycerate (2-PG) into phosphoenolpyruvate (PEP). It is essential for the degradation of carbohydrates via glycolysis. The sequence is that of Enolase from Streptococcus thermophilus.